The primary structure comprises 228 residues: Uracil-DNA glycosylase (228 aa).

Asp64 serves as the catalytic Proton acceptor.

It belongs to the uracil-DNA glycosylase (UDG) superfamily. UNG family.

The protein localises to the cytoplasm. It carries out the reaction Hydrolyzes single-stranded DNA or mismatched double-stranded DNA and polynucleotides, releasing free uracil.. Functionally, excises uracil residues from the DNA which can arise as a result of misincorporation of dUMP residues by DNA polymerase or due to deamination of cytosine. This chain is Uracil-DNA glycosylase, found in Yersinia enterocolitica serotype O:8 / biotype 1B (strain NCTC 13174 / 8081).